Here is a 1380-residue protein sequence, read N- to C-terminus: DNA-directed RNA polymerase subunit beta (1380 aa).

Belongs to the RNA polymerase beta chain family. In terms of assembly, the RNAP catalytic core consists of 2 alpha, 1 beta, 1 beta' and 1 omega subunit. When a sigma factor is associated with the core the holoenzyme is formed, which can initiate transcription.

It carries out the reaction RNA(n) + a ribonucleoside 5'-triphosphate = RNA(n+1) + diphosphate. Functionally, DNA-dependent RNA polymerase catalyzes the transcription of DNA into RNA using the four ribonucleoside triphosphates as substrates. This chain is DNA-directed RNA polymerase subunit beta, found in Nitrobacter winogradskyi (strain ATCC 25391 / DSM 10237 / CIP 104748 / NCIMB 11846 / Nb-255).